We begin with the raw amino-acid sequence, 654 residues long: Chaperone protein HtpG (654 aa).

Residues 1–344 (MTVENAPQRE…SDDLPLNVSR (344 aa)) form an a; substrate-binding region. The segment at 345 to 556 (ELLQDSQVVR…EGGSPAYLER (212 aa)) is b. The segment at 557–654 (LLQQRGRGAG…AQTPASATAS (98 aa)) is c.

This sequence belongs to the heat shock protein 90 family. In terms of assembly, homodimer.

Its subcellular location is the cytoplasm. Its function is as follows. Molecular chaperone. Has ATPase activity. The polypeptide is Chaperone protein HtpG (Myxococcus xanthus (strain DK1622)).